Here is a 113-residue protein sequence, read N- to C-terminus: MNDKNVEFVATLISILTVKEALNSEMENFVKVRAAIDKRELKDDDKVAIFNINSTTSYQVFFIDKDTNIEELKEEFKKMNVRINYDSEQVLKRYIERLRIQNNSKPISNNNKQ.

This is an uncharacterized protein from Methanocaldococcus jannaschii (strain ATCC 43067 / DSM 2661 / JAL-1 / JCM 10045 / NBRC 100440) (Methanococcus jannaschii).